Here is a 491-residue protein sequence, read N- to C-terminus: Glycogen synthase (491 aa).

Arg-20 contributes to the ADP-alpha-D-glucose binding site.

It belongs to the glycosyltransferase 1 family. Bacterial/plant glycogen synthase subfamily.

The catalysed reaction is [(1-&gt;4)-alpha-D-glucosyl](n) + ADP-alpha-D-glucose = [(1-&gt;4)-alpha-D-glucosyl](n+1) + ADP + H(+). It functions in the pathway glycan biosynthesis; glycogen biosynthesis. Functionally, synthesizes alpha-1,4-glucan chains using ADP-glucose. This chain is Glycogen synthase, found in Prosthecochloris aestuarii (strain DSM 271 / SK 413).